The chain runs to 178 residues: GTP-dependent dephospho-CoA kinase (178 aa).

Residues D43, I44, V45, D62, K64, and E120 each contribute to the GTP site.

Belongs to the GTP-dependent DPCK family.

It catalyses the reaction 3'-dephospho-CoA + GTP = GDP + CoA + H(+). Its pathway is cofactor biosynthesis; coenzyme A biosynthesis. Its function is as follows. Catalyzes the GTP-dependent phosphorylation of the 3'-hydroxyl group of dephosphocoenzyme A to form coenzyme A (CoA). This chain is GTP-dependent dephospho-CoA kinase, found in Natronomonas pharaonis (strain ATCC 35678 / DSM 2160 / CIP 103997 / JCM 8858 / NBRC 14720 / NCIMB 2260 / Gabara) (Halobacterium pharaonis).